The chain runs to 151 residues: Arginine repressor (151 aa).

Belongs to the ArgR family.

It localises to the cytoplasm. It functions in the pathway amino-acid biosynthesis; L-arginine biosynthesis [regulation]. Regulates arginine biosynthesis genes. The polypeptide is Arginine repressor (Pelotomaculum thermopropionicum (strain DSM 13744 / JCM 10971 / SI)).